We begin with the raw amino-acid sequence, 187 residues long: Large ribosomal subunit protein uL5 (187 aa).

Belongs to the universal ribosomal protein uL5 family. Part of the 50S ribosomal subunit; part of the 5S rRNA/L5/L18/L25 subcomplex. Contacts the 5S rRNA and the P site tRNA. Forms a bridge to the 30S subunit in the 70S ribosome.

Functionally, this is one of the proteins that bind and probably mediate the attachment of the 5S RNA into the large ribosomal subunit, where it forms part of the central protuberance. In the 70S ribosome it contacts protein S13 of the 30S subunit (bridge B1b), connecting the 2 subunits; this bridge is implicated in subunit movement. Contacts the P site tRNA; the 5S rRNA and some of its associated proteins might help stabilize positioning of ribosome-bound tRNAs. This is Large ribosomal subunit protein uL5 from Ruegeria sp. (strain TM1040) (Silicibacter sp.).